A 275-amino-acid chain; its full sequence is Phosphate import ATP-binding protein PstB 1 (275 aa).

The ABC transporter domain occupies 22–261 (LETQAVSVYY…NRTEKIFNSP (240 aa)). 54–61 (GPSGCGKS) serves as a coordination point for ATP.

Belongs to the ABC transporter superfamily. Phosphate importer (TC 3.A.1.7) family. As to quaternary structure, the complex is composed of two ATP-binding proteins (PstB), two transmembrane proteins (PstC and PstA) and a solute-binding protein (PstS).

It localises to the cell inner membrane. It carries out the reaction phosphate(out) + ATP + H2O = ADP + 2 phosphate(in) + H(+). Its function is as follows. Part of the ABC transporter complex PstSACB involved in phosphate import. Responsible for energy coupling to the transport system. In Synechococcus sp. (strain JA-2-3B'a(2-13)) (Cyanobacteria bacterium Yellowstone B-Prime), this protein is Phosphate import ATP-binding protein PstB 1.